The chain runs to 593 residues: Methylenetetrahydrofolate reductase (NADH) 1 (593 aa).

E21 acts as the Proton donor/acceptor in catalysis. NAD(+) is bound by residues 21–26 (EYFPPK) and 52–53 (TW). FAD-binding positions include 52–53 (TW), H81, 111–113 (RGD), Y153, 157–160 (HPDA), D175, and K182. D113 is a binding site for substrate. Positions 193 and 285 each coordinate substrate.

Belongs to the methylenetetrahydrofolate reductase family. Homodimer. FAD serves as cofactor.

It catalyses the reaction (6S)-5-methyl-5,6,7,8-tetrahydrofolate + NAD(+) = (6R)-5,10-methylene-5,6,7,8-tetrahydrofolate + NADH + H(+). It participates in one-carbon metabolism; tetrahydrofolate interconversion. Its activity is regulated as follows. Plant MTHFRs strongly prefer NADH over NADPH. Not inhibited by methionine or S-adenosylmethionine. Its function is as follows. The probable reversibility of the MTHFR reaction in plants suggests that they can metabolize the methyl group of 5,10-methylenetetrahydrofolate to serine, sugars and starch. This is Methylenetetrahydrofolate reductase (NADH) 1 from Zea mays (Maize).